The following is a 344-amino-acid chain: tRNA N6-adenosine threonylcarbamoyltransferase (344 aa).

2 residues coordinate Fe cation: His110 and His114. Substrate-binding positions include Val133–Ala137, Asp166, Gly179, and Asn278. Asp303 contacts Fe cation.

Belongs to the KAE1 / TsaD family. Fe(2+) serves as cofactor.

It is found in the cytoplasm. It catalyses the reaction L-threonylcarbamoyladenylate + adenosine(37) in tRNA = N(6)-L-threonylcarbamoyladenosine(37) in tRNA + AMP + H(+). Required for the formation of a threonylcarbamoyl group on adenosine at position 37 (t(6)A37) in tRNAs that read codons beginning with adenine. Is involved in the transfer of the threonylcarbamoyl moiety of threonylcarbamoyl-AMP (TC-AMP) to the N6 group of A37, together with TsaE and TsaB. TsaD likely plays a direct catalytic role in this reaction. This is tRNA N6-adenosine threonylcarbamoyltransferase from Chlamydia abortus (strain DSM 27085 / S26/3) (Chlamydophila abortus).